Consider the following 314-residue polypeptide: Methionyl-tRNA formyltransferase (314 aa).

112-115 (SLLP) is a binding site for (6S)-5,6,7,8-tetrahydrofolate.

The protein belongs to the Fmt family.

It carries out the reaction L-methionyl-tRNA(fMet) + (6R)-10-formyltetrahydrofolate = N-formyl-L-methionyl-tRNA(fMet) + (6S)-5,6,7,8-tetrahydrofolate + H(+). Functionally, attaches a formyl group to the free amino group of methionyl-tRNA(fMet). The formyl group appears to play a dual role in the initiator identity of N-formylmethionyl-tRNA by promoting its recognition by IF2 and preventing the misappropriation of this tRNA by the elongation apparatus. In Aeromonas hydrophila subsp. hydrophila (strain ATCC 7966 / DSM 30187 / BCRC 13018 / CCUG 14551 / JCM 1027 / KCTC 2358 / NCIMB 9240 / NCTC 8049), this protein is Methionyl-tRNA formyltransferase.